Here is a 760-residue protein sequence, read N- to C-terminus: ATP-dependent DNA helicase Hel308 (760 aa).

Residues glutamine 28 and 46–53 each bind ATP; that span reads IPTASGKT. The Helicase ATP-binding domain occupies 33–199; it reads EMGLLEKKNL…WLGAALVLSE (167 aa). The DEAH box motif lies at 144–147; that stretch reads DEIH. Residues 232-426 enclose the Helicase C-terminal domain; that stretch reads AVNLVLDTIK…SKLGTENALR (195 aa).

This sequence belongs to the helicase family. Hel308 subfamily. As to quaternary structure, monomer.

It catalyses the reaction Couples ATP hydrolysis with the unwinding of duplex DNA by translocating in the 3'-5' direction.. It carries out the reaction ATP + H2O = ADP + phosphate + H(+). Functionally, DNA-dependent ATPase and 3'-5' DNA helicase that may be involved in repair of stalled replication forks. This chain is ATP-dependent DNA helicase Hel308, found in Methanococcoides burtonii (strain DSM 6242 / NBRC 107633 / OCM 468 / ACE-M).